The primary structure comprises 123 residues: Transmembrane protein 049L (123 aa).

2 consecutive transmembrane segments (helical) span residues 67–87 (VFGA…LWLV) and 104–121 (LSLQ…GVYN).

It is found in the membrane. This chain is Transmembrane protein 049L, found in Acheta domesticus (House cricket).